Reading from the N-terminus, the 281-residue chain is MGLQAGTRQLHGNLILLPVAVVMLLLCTSPVCATASVGLPADCSRLTSSSPSGVYVIQPAQSPPRVVWCDMDTEGKGWTVVQRNTYSTEITWKESWTTYKYGFGNVQGDHWLGTEYLHLLTQQGTYKVRFVVRDKANVTHYAEYDIFRVESESSGYPLRLGRLLSSGKDYLTSYYSSYGGIHDNMKFSTVDKDQDQHSGNCASSYGGWWYDRCQNVLLNGKKYILWPEICPRVTACRPSSWSNPPMCADCARGWGSATIPSRSPSLPSPITATHTVRNQLQ.

The N-terminal stretch at methionine 1 to alanine 33 is a signal peptide. Residues threonine 34–methionine 246 form the Fibrinogen C-terminal domain. Intrachain disulfides connect cysteine 43-cysteine 69 and cysteine 201-cysteine 213. Low complexity predominate over residues proline 260–proline 269. A disordered region spans residues proline 260–glutamine 281. The span at isoleucine 270 to glutamine 281 shows a compositional bias: polar residues.

As to expression, expressed in smal intestine, colon and lung.

In terms of biological role, shows a cytidine deaminase activity on 2'-deoxycytidine (in vitro), however shows no RNA editing activity (in vitro). The protein is Fibrinogen-like protein 1-like protein of Gallus gallus (Chicken).